Consider the following 358-residue polypeptide: Chondroadherin (358 aa).

The first 20 residues, 1–20 (MARALLFSLVFLAILLPALA), serve as a signal peptide directing secretion. Residues 21 to 50 (ACPQNCHCHGDLQHVICDKVGLQKIPKVSE) form the LRRNT domain. A disulfide bond links Cys-22 and Cys-37. LRR repeat units lie at residues 51-72 (TTKL…SFRT), 75-96 (NLVS…AFRG), 99-120 (QLIY…AFDD), 123-144 (ELTY…LLSP), 147-168 (NLFI…AFQG), 171-192 (DLRW…SLDD), 195-216 (NLAK…ALSK), 219-240 (VVEE…AFQS), 244-265 (YLET…AFSG), and 268-289 (TLKH…FPFD). Ser-143 is a glycosylation site (O-linked (GalNAc...) serine). Positions 299 to 347 (NPWKCTCQLRGLRRWLEAKASRPDATCSSPAKFKGQRIRDTDALRSCKS) constitute an LRRCT domain. Intrachain disulfides connect Cys-303-Cys-345 and Cys-305-Cys-325. The tract at residues 322–358 (DATCSSPAKFKGQRIRDTDALRSCKSPTKRSKKAGRH) is disordered. Residues 348 to 358 (PTKRSKKAGRH) are compositionally biased toward basic residues.

Belongs to the small leucine-rich proteoglycan (SLRP) family. SLRP class IV subfamily. Mostly monomeric. Interacts with collagen type II. As to expression, cartilage.

Its subcellular location is the secreted. The protein localises to the extracellular space. It localises to the extracellular matrix. Functionally, promotes attachment of chondrocytes, fibroblasts, and osteoblasts. This binding is mediated (at least for chondrocytes and fibroblasts) by the integrin alpha(2)beta(1). May play an important role in the regulation of chondrocyte growth and proliferation. This is Chondroadherin (Chad) from Mus musculus (Mouse).